The sequence spans 302 residues: MSDYKLSHLQELEAESIHIIREVAAEFENPVMLYSIGKDSSVMVRLAEKAFAPGKVPFPLMHIDSKWKFKEMIEFRDSYAKKFGWNLIVESNMEAFHAGVGPFTHGSKVHTDLMKTQALLHALDKYKFDAAFGGARRDEEKSRAKERIFSFRDKFHQWDPKNQRPELWDIYNARVHKGESIRVFPLSNWTELDIWQYIRLENIPIVPLYFAKERPCVEIDGNLIMADDDRLPEQYRDQIRMRMVRFRTLGCWPLTGAVESEADTIEKIVEEMMTTTKSERTTRVIDFDQDASMEQKKREGYF.

This sequence belongs to the PAPS reductase family. CysD subfamily. Heterodimer composed of CysD, the smaller subunit, and CysN.

The enzyme catalyses sulfate + ATP + H(+) = adenosine 5'-phosphosulfate + diphosphate. Its pathway is sulfur metabolism; hydrogen sulfide biosynthesis; sulfite from sulfate: step 1/3. Functionally, with CysN forms the ATP sulfurylase (ATPS) that catalyzes the adenylation of sulfate producing adenosine 5'-phosphosulfate (APS) and diphosphate, the first enzymatic step in sulfur assimilation pathway. APS synthesis involves the formation of a high-energy phosphoric-sulfuric acid anhydride bond driven by GTP hydrolysis by CysN coupled to ATP hydrolysis by CysD. The polypeptide is Sulfate adenylyltransferase subunit 2 (Parabacteroides distasonis (strain ATCC 8503 / DSM 20701 / CIP 104284 / JCM 5825 / NCTC 11152)).